A 315-amino-acid polypeptide reads, in one-letter code: Ribosomal protein L11 methyltransferase (315 aa).

The S-adenosyl-L-methionine site is built by Thr164, Gly185, Asp207, and Asn250.

The protein belongs to the methyltransferase superfamily. PrmA family.

It is found in the cytoplasm. It carries out the reaction L-lysyl-[protein] + 3 S-adenosyl-L-methionine = N(6),N(6),N(6)-trimethyl-L-lysyl-[protein] + 3 S-adenosyl-L-homocysteine + 3 H(+). Methylates ribosomal protein L11. The protein is Ribosomal protein L11 methyltransferase of Exiguobacterium sibiricum (strain DSM 17290 / CCUG 55495 / CIP 109462 / JCM 13490 / 255-15).